The sequence spans 200 residues: Large ribosomal subunit protein uL18 (200 aa).

Belongs to the universal ribosomal protein uL18 family. In terms of assembly, part of the 50S ribosomal subunit. Contacts the 5S and 23S rRNAs.

Its function is as follows. This is one of the proteins that bind and probably mediate the attachment of the 5S RNA into the large ribosomal subunit, where it forms part of the central protuberance. This Thermococcus sibiricus (strain DSM 12597 / MM 739) protein is Large ribosomal subunit protein uL18.